Reading from the N-terminus, the 588-residue chain is Ankyrin repeat and SOCS box protein 15 (588 aa).

11 ANK repeats span residues 75-104 (KGWF…KTLW), 110-139 (DGET…WPNT), 143-172 (KGET…SLDQ), 176-205 (KRWS…NVHL), 209-238 (FGVT…DVLA), 242-271 (DGAS…SGNI), 275-304 (AGHL…KHAI), 307-336 (SGLT…DVNS), 349-378 (ERKT…DPNL), 379-408 (DPLN…NVNC), and 416-444 (TRFP…QVEM). One can recognise an SOCS box domain in the interval 524–579 (WPEIRQILENPCSLKHLCRLKIRRLMGLQRLCQPTLMEKLSLPPTIQRYILFKEYD).

This sequence belongs to the ankyrin SOCS box (ASB) family.

The protein operates within protein modification; protein ubiquitination. In terms of biological role, may be a substrate-recognition component of a SCF-like ECS (Elongin-Cullin-SOCS-box protein) E3 ubiquitin-protein ligase complex which mediates the ubiquitination and subsequent proteasomal degradation of target proteins. This Bos taurus (Bovine) protein is Ankyrin repeat and SOCS box protein 15 (ASB15).